Consider the following 447-residue polypeptide: MGEDTDTRKINHSFLRDHSYVTEADVISTVEFNHTGELLATGDKGGRVVIFQREPESKNAPHSQGEYDVYSTFQSHEPEFDYLKSLEIEEKINKIKWLPQQNAAHSLLSTNDKTIKLWKITERDKRPEGYNLKDEEGKLKDLSTVTSLQVPVLKPMDLMVEVSPRRTFANGHTYHINSISVNSDCETYMSADDLRINLWHLAITDRSFNIVDIKPANMEDLTEVITASEFHPHHCNLFVYSSSKGSLRLCDMRAAALCDKHSKLFEEPEDPSNRSFFSEIISSVSDVKFSHSGRYMLTRDYLTVKVWDLNMEARPIETYQVHDYLRSKLCSLYESDCIFDKFECAWNGSDSVIMTGAYNNFFRMFDRNTKRDVTLEASRESSKPRAVLKPRRVCVGGKRRRDDISVDSLDFTKKILHTAWHPAENIIAIAATNNLYIFQDKVNSDMH.

WD repeat units lie at residues 22–61 (TEADVISTVEFNHTGELLATGDKGGRVVIFQREPESKNAP), 87–128 (EIEE…KRPE), 171–209 (GHTYHINSISVNSDCETYMSADDLRINLWHLAITDRSFN), 220–260 (DLTE…LCDK), 279–317 (EIISSVSDVKFSHSGRYMLTRDYLTVKVWDLNMEARPIE), 334–375 (ESDC…DVTL), and 410–446 (DFTKKILHTAWHPAENIIAIAATNNLYIFQDKVNSDM).

This sequence belongs to the phosphatase 2A regulatory subunit B family. PP2A consists of a common heterodimeric core enzyme, composed of a 36 kDa catalytic subunit (subunit C) and a 65 kDa constant regulatory subunit (PR65 or subunit A), that associates with a variety of regulatory subunits. Proteins that associate with the core dimer include three families of regulatory subunits B (the R2/B/PR55/B55, R3/B''/PR72/PR130/PR59 and R5/B'/B56 families), the 48 kDa variable regulatory subunit, viral proteins, and cell signaling molecules. Interacts with IER5.

In terms of biological role, the B regulatory subunit might modulate substrate selectivity and catalytic activity, and might also direct the localization of the catalytic enzyme to a particular subcellular compartment. The sequence is that of Serine/threonine-protein phosphatase 2A 55 kDa regulatory subunit B gamma isoform (Ppp2r2c) from Mus musculus (Mouse).